A 189-amino-acid chain; its full sequence is Elongation factor P (189 aa).

An N6-(3,6-diaminohexanoyl)-5-hydroxylysine modification is found at Lys-34.

This sequence belongs to the elongation factor P family. Post-translationally, may be beta-lysylated on the epsilon-amino group of Lys-34 by the combined action of EpmA and EpmB, and then hydroxylated on the C5 position of the same residue by EpmC (if this protein is present). Lysylation is critical for the stimulatory effect of EF-P on peptide-bond formation. The lysylation moiety may extend toward the peptidyltransferase center and stabilize the terminal 3-CCA end of the tRNA. Hydroxylation of the C5 position on Lys-34 may allow additional potential stabilizing hydrogen-bond interactions with the P-tRNA.

It localises to the cytoplasm. Its pathway is protein biosynthesis; polypeptide chain elongation. Functionally, involved in peptide bond synthesis. Alleviates ribosome stalling that occurs when 3 or more consecutive Pro residues or the sequence PPG is present in a protein, possibly by augmenting the peptidyl transferase activity of the ribosome. Modification of Lys-34 is required for alleviation. This chain is Elongation factor P, found in Legionella pneumophila (strain Lens).